Here is a 246-residue protein sequence, read N- to C-terminus: Protein lin-37 homolog (246 aa).

Met1 carries the post-translational modification N-acetylmethionine. Glycyl lysine isopeptide (Lys-Gly) (interchain with G-Cter in SUMO2) cross-links involve residues Lys5 and Lys7. The span at 36-55 (DRERLDEEPGKTSLDTHNKD) shows a compositional bias: basic and acidic residues. 2 disordered regions span residues 36–90 (DRER…GGPQ) and 127–209 (PTVR…LIYR). Ser135 and Ser138 each carry phosphoserine. Residues 163-172 (LPPPTAPGPP) show a composition bias toward pro residues. Thr167 is subject to Phosphothreonine. 2 positions are modified to phosphoserine: Ser182 and Ser202.

Component of the DREAM complex (also named LINC complex) at least composed of E2F4, E2F5, LIN9, LIN37, LIN52, LIN54, MYBL1, MYBL2, RBL1, RBL2, RBBP4, TFDP1 and TFDP2. The complex exists in quiescent cells where it represses cell cycle-dependent genes. It dissociates in S phase when LIN9, LIN37, LIN52 and LIN54 form a subcomplex that binds to MYBL2.

This is Protein lin-37 homolog (LIN37) from Bos taurus (Bovine).